The following is a 350-amino-acid chain: uncharacterized protein (350 aa).

Positions 171–334 (PTVVIAGYPN…LKERLKKIAI (164 aa)) constitute an OBG-type G domain. GTP is bound by residues 177 to 184 (GYPNVGKS), 219 to 223 (DTPGL), and 286 to 289 (NKID).

Belongs to the TRAFAC class OBG-HflX-like GTPase superfamily. OBG GTPase family. NOG subfamily.

This is an uncharacterized protein from Methanocaldococcus jannaschii (strain ATCC 43067 / DSM 2661 / JAL-1 / JCM 10045 / NBRC 100440) (Methanococcus jannaschii).